Consider the following 108-residue polypeptide: uncharacterized protein (108 aa).

Positions 74–108 (TGSKKRDSKANSRSRPSGTITSRGARIGLQGYKSH) are disordered. The span at 84–95 (NSRSRPSGTITS) shows a compositional bias: polar residues.

This is an uncharacterized protein from Saccharomyces cerevisiae (strain ATCC 204508 / S288c) (Baker's yeast).